Reading from the N-terminus, the 289-residue chain is Cuticle collagen 19 (289 aa).

The first 18 residues, 1-18 (MGKLIVVGSCGVLVCVLA), serve as a signal peptide directing secretion. Residues 95-289 (SEGCPAGPPG…PCPSRAAYKA (195 aa)) are disordered. Triple-helical region stretches follow at residues 101-130 (GPPG…PGVI) and 147-269 (GRPG…KGED). Over residues 162–183 (GPAGGNGRRGPPGPVGGPGEQG) the composition is skewed to gly residues. Low complexity-rich tracts occupy residues 184-207 (PQGD…GEPG) and 223-239 (PRGE…PGND).

It belongs to the cuticular collagen family. As to quaternary structure, collagen polypeptide chains are complexed within the cuticle by disulfide bonds and other types of covalent cross-links.

In terms of biological role, nematode cuticles are composed largely of collagen-like proteins. The cuticle functions both as an exoskeleton and as a barrier to protect the worm from its environment. This chain is Cuticle collagen 19 (col-19), found in Caenorhabditis elegans.